Here is a 93-residue protein sequence, read N- to C-terminus: Putative regulatory protein Amet_2791 (93 aa).

This sequence belongs to the RemA family.

The polypeptide is Putative regulatory protein Amet_2791 (Alkaliphilus metalliredigens (strain QYMF)).